The following is a 147-amino-acid chain: Large ribosomal subunit protein uL16 (147 aa).

Belongs to the universal ribosomal protein uL16 family. Part of the 50S ribosomal subunit.

Functionally, binds 23S rRNA and is also seen to make contacts with the A and possibly P site tRNAs. The sequence is that of Large ribosomal subunit protein uL16 from Clostridium tetani (strain Massachusetts / E88).